We begin with the raw amino-acid sequence, 411 residues long: KIN17-like protein (411 aa).

Residues 28–50 form a C2H2-type zinc finger; it reads CQMCQKQCRDENGFKCHCMSESH. The interval 51–160 is winged helix-turn-helix (wHTH); that stretch reads QRQMQVFGQN…KERLKNKRVK (110 aa). Positions 147–183 form a coiled coil; that stretch reads ETLFKERLKNKRVKSDLAEEEKQEREIQRQIERAAEK. Disordered stretches follow at residues 182 to 211 and 232 to 286; these read EKLN…KKDE and VATG…EEEK. Residues 253–286 are compositionally biased toward basic and acidic residues; that stretch reads KVERGEKRKRSGDSGRSEKERRSALDELMKEEEK. Residues 259-262 carry the Nuclear localization signal (NLS) motif; sequence KRKR. A coiled-coil region spans residues 265-294; sequence DSGRSEKERRSALDELMKEEEKKKERMNRK. Residues 301-352 form a C-terminal subdomain A region; the sequence is GIIVKVMSKALAEKGYYKQKGVVKKVIDNYVGEIKMLDSKHVLRVDQKELET. Residues 358-409 are C-terminal subdomain B; that stretch reads GGMVKIVNGAYRGSNARLLGVDTEKFCAKVQIEKGVYDGRVIKSIEYEDICK.

The protein belongs to the KIN17 family. Interacts with SPL7. As to expression, expressed in root vasculature, lateral roots, cotyledons, rosette leaves, cauline leaves, stems, sepals, style of pistils, mature pollen grains and siliques.

The protein localises to the nucleus speckle. Its function is as follows. Promotes the copper deficiency response by direct interaction with SPL7. Acts with SPL7 in a common pathway to promote copper-responsive genes and alleviate oxidative stress during copper-limiting periods. May promote SPL7 function when copper is limiting. Participates in the control of general plant growth and development, and in the response to counteract the negative effects of UV radiation. This chain is KIN17-like protein, found in Arabidopsis thaliana (Mouse-ear cress).